The chain runs to 925 residues: Translation initiation factor IF-2 (925 aa).

The segment at 190 to 329 is disordered; the sequence is PAAPTSEAAP…RRRDEREAAV (140 aa). Composition is skewed to pro residues over residues 199-209, 217-238, and 279-288; these read PPEPEPTPLPA, PVRPPAPPAPAKPTPAPAPAPR, and RPVPAQPAPQ. Low complexity predominate over residues 289 to 307; sequence TPTRSGSGIAKKGAITKAG. Residues 320 to 329 are compositionally biased toward basic and acidic residues; the sequence is RRRDEREAAV. In terms of domain architecture, tr-type G spans 417–589; it reads VRPPVVTIMG…LLLVADYELE (173 aa). A G1 region spans residues 426–433; the sequence is GHVDHGKT. GTP is bound at residue 426-433; that stretch reads GHVDHGKT. Positions 451 to 455 are G2; sequence GITQH. The interval 476–479 is G3; it reads DTPG. GTP contacts are provided by residues 476-480 and 530-533; these read DTPGH and NKVD. The interval 530–533 is G4; that stretch reads NKVD. The tract at residues 566-568 is G5; the sequence is SAK.

It belongs to the TRAFAC class translation factor GTPase superfamily. Classic translation factor GTPase family. IF-2 subfamily.

It localises to the cytoplasm. Its function is as follows. One of the essential components for the initiation of protein synthesis. Protects formylmethionyl-tRNA from spontaneous hydrolysis and promotes its binding to the 30S ribosomal subunits. Also involved in the hydrolysis of GTP during the formation of the 70S ribosomal complex. The polypeptide is Translation initiation factor IF-2 (Gloeobacter violaceus (strain ATCC 29082 / PCC 7421)).